A 399-amino-acid chain; its full sequence is Forkhead box protein A4-A (399 aa).

The segment at residues 119–213 (KPPYSYISLI…ENGCYLRRQK (95 aa)) is a DNA-binding region (fork-head). Basic and acidic residues predominate over residues 219 to 234 (RSKSGEGEKKVNKPGE). The tract at residues 219–290 (RSKSGEGEKK…VGLSPTSEQA (72 aa)) is disordered. The segment covering 267 to 277 (STGSSIHQACG) has biased composition (polar residues).

As to expression, during stages 8.5 to 10, expressed in the part of the dorsal mesoderm invaginating the dorsal blastopore lip (Spemann organizer), as a direct response to dorsal mesodermal induction. At stage 12 (mid-gastrulation), restricted to the dorsal midline in the deeper layers of mesodermal cells. Continuously present in the posterior portion of invaginated mesoderm and expressed within the notochord. Also present in the midline of the neural plate during gastrulation, but absent from the notoplate in exogastrula embryos. Expression in the notochord continues in neurula-stage embryos and at stage 20 in addition to the notochord, expression is seen in the pharyngeal endoderm.

It is found in the nucleus. Its function is as follows. Transcriptional repressor involved in embryonic nervous system development. Plays a role in the induction and patterning of the anterior-posterior neural axis. Involved in the establishment of floor plate differentiation from neural plate cells during gastrulation. Binds the anf1 promoter sequence to restrict expression of anf1 to the anterior of the neural plate, thereby patterning the forebrain. Can bind to the HNF-3-alpha DNA target sequence. Cooperates with t/bra in a dose-dependent manner to specify dorsal mesoderm formation, including notochord. Binds to DNA via the target sequence 5'-[GA]TAAA[TC]A-3', with 5'-GTAAATA-3' being the preferred binding site. This is Forkhead box protein A4-A (foxa4-a) from Xenopus laevis (African clawed frog).